Reading from the N-terminus, the 213-residue chain is Pyrrolidone-carboxylate peptidase (213 aa).

Residues E78, C141, and H165 contribute to the active site.

This sequence belongs to the peptidase C15 family. As to quaternary structure, homotetramer.

It localises to the cytoplasm. It catalyses the reaction Release of an N-terminal pyroglutamyl group from a polypeptide, the second amino acid generally not being Pro.. Removes 5-oxoproline from various penultimate amino acid residues except L-proline. The protein is Pyrrolidone-carboxylate peptidase of Clostridium perfringens (strain ATCC 13124 / DSM 756 / JCM 1290 / NCIMB 6125 / NCTC 8237 / Type A).